A 155-amino-acid chain; its full sequence is Large ribosomal subunit protein uL22 (155 aa).

The protein belongs to the universal ribosomal protein uL22 family. As to quaternary structure, part of the 50S ribosomal subunit. Contacts the macrolide antibiotic tylosin in the polypeptide exit tunnel.

Its function is as follows. This protein binds specifically to 23S rRNA. It makes multiple contacts with different domains of the 23S rRNA in the assembled 50S subunit and ribosome. In terms of biological role, contacts all 6 domains of the 23S rRNA, helping stabilize their relative orientation. An extended beta-hairpin in the C-terminus forms part of the polypeptide exit tunnel, in which it helps forms a bend with protein L4, while most of the rest of the protein is located at the polypeptide exit tunnel on the outside of the subunit. This chain is Large ribosomal subunit protein uL22, found in Haloarcula marismortui (strain ATCC 43049 / DSM 3752 / JCM 8966 / VKM B-1809) (Halobacterium marismortui).